The chain runs to 234 residues: RNA chaperone ProQ (234 aa).

The span at 104–130 shows a compositional bias: basic and acidic residues; the sequence is LEEAKARVQAQRDARKREAAENGEKRE. The segment at 104 to 186 is disordered; the sequence is LEEAKARVQA…QRSTPVTSLE (83 aa). A compositionally biased stretch (basic residues) spans 131–142; it reads PRRPRPAGKKPT. 2 stretches are compositionally biased toward basic and acidic residues: residues 143 to 156 and 163 to 176; these read ARRD…EVRK and TSER…ETTE. Residues 177–186 show a composition bias toward polar residues; the sequence is QRSTPVTSLE.

It belongs to the ProQ family.

It localises to the cytoplasm. RNA chaperone with significant RNA binding, RNA strand exchange and RNA duplexing activities. May regulate ProP activity through an RNA-based, post-transcriptional mechanism. This is RNA chaperone ProQ from Edwardsiella ictaluri (strain 93-146).